Consider the following 255-residue polypeptide: Hydroxyacylglutathione hydrolase (255 aa).

The Zn(2+) site is built by histidine 53, histidine 55, aspartate 57, histidine 58, histidine 110, aspartate 127, and histidine 165.

This sequence belongs to the metallo-beta-lactamase superfamily. Glyoxalase II family. As to quaternary structure, monomer. Zn(2+) is required as a cofactor.

It catalyses the reaction an S-(2-hydroxyacyl)glutathione + H2O = a 2-hydroxy carboxylate + glutathione + H(+). It functions in the pathway secondary metabolite metabolism; methylglyoxal degradation; (R)-lactate from methylglyoxal: step 2/2. Its function is as follows. Thiolesterase that catalyzes the hydrolysis of S-D-lactoyl-glutathione to form glutathione and D-lactic acid. This Xanthomonas campestris pv. campestris (strain 8004) protein is Hydroxyacylglutathione hydrolase.